Consider the following 310-residue polypeptide: tRNA pseudouridine synthase B (310 aa).

Asp-49 (nucleophile) is an active-site residue.

This sequence belongs to the pseudouridine synthase TruB family. Type 1 subfamily.

The enzyme catalyses uridine(55) in tRNA = pseudouridine(55) in tRNA. In terms of biological role, responsible for synthesis of pseudouridine from uracil-55 in the psi GC loop of transfer RNAs. This Rhizobium etli (strain ATCC 51251 / DSM 11541 / JCM 21823 / NBRC 15573 / CFN 42) protein is tRNA pseudouridine synthase B.